A 327-amino-acid chain; its full sequence is Glycolipid sulfotransferase BCG_1434 (327 aa).

K40–W45 lines the 3'-phosphoadenylyl sulfate pocket. The active-site Proton acceptor is H97. Residue R116–S124 coordinates 3'-phosphoadenylyl sulfate.

The protein belongs to the sulfotransferase 1 family.

Functionally, involved in the synthesis of cell wall sulfolipids. In Mycobacterium bovis (strain BCG / Pasteur 1173P2), this protein is Glycolipid sulfotransferase BCG_1434.